A 72-amino-acid polypeptide reads, in one-letter code: Translation initiation factor IF-1 (72 aa).

One can recognise an S1-like domain in the interval M1–K72.

The protein belongs to the IF-1 family. As to quaternary structure, component of the 30S ribosomal translation pre-initiation complex which assembles on the 30S ribosome in the order IF-2 and IF-3, IF-1 and N-formylmethionyl-tRNA(fMet); mRNA recruitment can occur at any time during PIC assembly.

The protein resides in the cytoplasm. Its function is as follows. One of the essential components for the initiation of protein synthesis. Stabilizes the binding of IF-2 and IF-3 on the 30S subunit to which N-formylmethionyl-tRNA(fMet) subsequently binds. Helps modulate mRNA selection, yielding the 30S pre-initiation complex (PIC). Upon addition of the 50S ribosomal subunit IF-1, IF-2 and IF-3 are released leaving the mature 70S translation initiation complex. The sequence is that of Translation initiation factor IF-1 from Dinoroseobacter shibae (strain DSM 16493 / NCIMB 14021 / DFL 12).